A 205-amino-acid polypeptide reads, in one-letter code: Holliday junction branch migration complex subunit RuvA (205 aa).

Positions 1-63 (MIGMLRGHVE…QDAITLFGFG (63 aa)) are domain I. The segment at 64–142 (TLASKRMFLQ…LSQIEGSSAT (79 aa)) is domain II. The interval 143–145 (AST) is flexible linker. The segment at 146–205 (PEDTGAEQVVEGLMSLGWHQQDAAHAVQTVCADNQIETPLNAKDVPRVLKLALTSLDRGR) is domain III.

Belongs to the RuvA family. Homotetramer. Forms an RuvA(8)-RuvB(12)-Holliday junction (HJ) complex. HJ DNA is sandwiched between 2 RuvA tetramers; dsDNA enters through RuvA and exits via RuvB. An RuvB hexamer assembles on each DNA strand where it exits the tetramer. Each RuvB hexamer is contacted by two RuvA subunits (via domain III) on 2 adjacent RuvB subunits; this complex drives branch migration. In the full resolvosome a probable DNA-RuvA(4)-RuvB(12)-RuvC(2) complex forms which resolves the HJ.

The protein localises to the cytoplasm. In terms of biological role, the RuvA-RuvB-RuvC complex processes Holliday junction (HJ) DNA during genetic recombination and DNA repair, while the RuvA-RuvB complex plays an important role in the rescue of blocked DNA replication forks via replication fork reversal (RFR). RuvA specifically binds to HJ cruciform DNA, conferring on it an open structure. The RuvB hexamer acts as an ATP-dependent pump, pulling dsDNA into and through the RuvAB complex. HJ branch migration allows RuvC to scan DNA until it finds its consensus sequence, where it cleaves and resolves the cruciform DNA. In Bifidobacterium adolescentis (strain ATCC 15703 / DSM 20083 / NCTC 11814 / E194a), this protein is Holliday junction branch migration complex subunit RuvA.